Reading from the N-terminus, the 164-residue chain is C-phycoerythrin class 1 subunit alpha (164 aa).

Residues Cys82 and Cys139 each contribute to the (2R,3E)-phycoerythrobilin site.

This sequence belongs to the phycobiliprotein family. As to quaternary structure, heterodimer of an alpha and a beta chain. Post-translationally, contains one covalently linked bilin chromophore.

It localises to the cellular thylakoid membrane. Functionally, light-harvesting photosynthetic bile pigment-protein from the phycobiliprotein complex. In Synechococcus sp. (strain WH7803), this protein is C-phycoerythrin class 1 subunit alpha (cpeA).